Here is a 180-residue protein sequence, read N- to C-terminus: NAD(P)H-quinone oxidoreductase subunit I, chloroplastic (180 aa).

4Fe-4S ferredoxin-type domains are found at residues 55 to 84 (GRIH…VDWR) and 95 to 124 (LNYS…MTEE). [4Fe-4S] cluster is bound by residues cysteine 64, cysteine 67, cysteine 70, cysteine 74, cysteine 104, cysteine 107, cysteine 110, and cysteine 114.

Belongs to the complex I 23 kDa subunit family. As to quaternary structure, NDH is composed of at least 16 different subunits, 5 of which are encoded in the nucleus. It depends on [4Fe-4S] cluster as a cofactor.

Its subcellular location is the plastid. It is found in the chloroplast thylakoid membrane. The enzyme catalyses a plastoquinone + NADH + (n+1) H(+)(in) = a plastoquinol + NAD(+) + n H(+)(out). It catalyses the reaction a plastoquinone + NADPH + (n+1) H(+)(in) = a plastoquinol + NADP(+) + n H(+)(out). In terms of biological role, NDH shuttles electrons from NAD(P)H:plastoquinone, via FMN and iron-sulfur (Fe-S) centers, to quinones in the photosynthetic chain and possibly in a chloroplast respiratory chain. The immediate electron acceptor for the enzyme in this species is believed to be plastoquinone. Couples the redox reaction to proton translocation, and thus conserves the redox energy in a proton gradient. The sequence is that of NAD(P)H-quinone oxidoreductase subunit I, chloroplastic from Triticum aestivum (Wheat).